We begin with the raw amino-acid sequence, 217 residues long: Serine acetyltransferase (217 aa).

The protein belongs to the transferase hexapeptide repeat family.

The protein resides in the cytoplasm. It carries out the reaction L-serine + acetyl-CoA = O-acetyl-L-serine + CoA. It participates in amino-acid biosynthesis; L-cysteine biosynthesis; L-cysteine from L-serine: step 1/2. With respect to regulation, inhibited by cysteine. Functionally, catalyzes the acetylation of serine by acetyl-CoA to produce O-acetylserine (OAS). The chain is Serine acetyltransferase from Bacillus pumilus (strain SAFR-032).